A 356-amino-acid chain; its full sequence is Butyrate kinase (356 aa).

Belongs to the acetokinase family.

The protein localises to the cytoplasm. The catalysed reaction is butanoate + ATP = butanoyl phosphate + ADP. Its pathway is lipid metabolism; butanoate metabolism. Catalyzes the conversion of butyryl-CoA through butyryl phosphate to butyrate. The sequence is that of Butyrate kinase (buk) from Clostridium perfringens (strain 13 / Type A).